We begin with the raw amino-acid sequence, 169 residues long: MNLQRFDDSTLIRIFALHELHRLKEHGLTRGALLDYHSRYKLVFLAHSQPEYRKLGPFVADIHQWQNLDDYYNQYRQRVVVLLSHPANPRDHTNVLMHVQGYFRPHIDSTERQQLAALIDSYRRGEQPLLAPLMRIKHYMALYPDAWLSGQRYFELWPRVINLRHSGVL.

This is an uncharacterized protein from Escherichia coli (strain K12).